Here is a 1079-residue protein sequence, read N- to C-terminus: MPKSTDIKSILILGAGPIVIGQACEFDYSGTQACKALKEEGYRIILLNSNPATIMTDPDMADATYVEPIHWEIVEKIIQKEKPDALLPTMGGQTALNCALELDHKGILKKYGVQIIGATVDAIKKAENRKLFEHSMKKLNLETAKCGIAHNIQEAFLVLNNVGFPCIIRPSFTMGGHGGGIAYNHEEFEKICERGLELSPSTELLIDESLIGWKEYEMEVVRDKNDNCIIVCSIENLDPMGIHTGDSITVAPAQTLTDKEYQVMRNASMSILREIGVETGGSNVQFAINPKNGRMIVIEMNPRVSRSSALASKATGFPIAKIAAKLAIGYTLDELANDITGTNTTASFEPSIDYIVTKIPRFNFEKFPGCDDRLTTQMKSVGEVMAIGRTFQESIQKAIRGLEVGASGFDSKISSRDSEYLIKIRRELKDAGSERIWYIGDAFRYGMSINDVFDLTSIDPWFLVQIKEIILLEKKIIKNGFIGLKYDFFYFLKRKGFSDQRIAILTNKNESEIRQLRYKLNLHPVYKRIDTCSAEFSTETAYMYSTWEDECESHPSKNNKKIIILGGGPNRIGQGIEFDYCCVHAAQALREDGFEAIMVNCNPETVSTDYDISDRLYFEPITLENVLEIVRIEKPKGVIIQYGGQTPLKLAHEFEKEGVPIIGTSPDSIDTAENRYRFQKTVNKLRLQQPLNATVLTLDEAYKKADIIGYPIMVRPSYVLGGRAMEIVYEPYGLENYFKTTLKKNNTTPILLDQYLDYATEVDVDAICDGETVLIGGIMEHIEQAGVHSGDSACSLPAYTLTSKVQNEIRRQVKKLAFELSVKGLMNIQFAIKNNKIYIIEVNPRAARTVPFVSKAIGLALAKISVRVMCGKTLLEQGFIKEIIPPYFSVKEAVLPFDKFQGVDPILGPEMRSTGEVMGIGKNFSEAFSKSMLGAHTNMKKSGRVLLSVRNNDKNNIINLAVKLKKLGFKIDATKGTSVALKKSGISSRLVNKVHEGRPHIQDRLKNGEYSYIVNTTSCYQGIKDSKLICRSALQYKVHYDTTVNGAFATVMALNENPIKNIETLQKIHKKIQLFYTKK.

The interval 2–403 (PKSTDIKSIL…SIQKAIRGLE (402 aa)) is carboxyphosphate synthetic domain. Positions 129, 169, 175, 176, 208, 210, 215, 241, 242, 243, 285, and 299 each coordinate ATP. Residues 133-328 (EHSMKKLNLE…IAKIAAKLAI (196 aa)) enclose the ATP-grasp 1 domain. Residues glutamine 285, glutamate 299, and asparagine 301 each coordinate Mg(2+). Glutamine 285, glutamate 299, and asparagine 301 together coordinate Mn(2+). The interval 404-553 (VGASGFDSKI…YSTWEDECES (150 aa)) is oligomerization domain. The tract at residues 554-936 (HPSKNNKKII…AFSKSMLGAH (383 aa)) is carbamoyl phosphate synthetic domain. The 192-residue stretch at 679-870 (QKTVNKLRLQ…LAKISVRVMC (192 aa)) folds into the ATP-grasp 2 domain. Positions 715, 754, 756, 761, 786, 787, 788, 789, 829, and 841 each coordinate ATP. Mg(2+) is bound by residues glutamine 829, glutamate 841, and asparagine 843. The Mn(2+) site is built by glutamine 829, glutamate 841, and asparagine 843. The 143-residue stretch at 937-1079 (TNMKKSGRVL…KKIQLFYTKK (143 aa)) folds into the MGS-like domain. The tract at residues 937-1079 (TNMKKSGRVL…KKIQLFYTKK (143 aa)) is allosteric domain.

This sequence belongs to the CarB family. Composed of two chains; the small (or glutamine) chain promotes the hydrolysis of glutamine to ammonia, which is used by the large (or ammonia) chain to synthesize carbamoyl phosphate. Tetramer of heterodimers (alpha,beta)4. Requires Mg(2+) as cofactor. Mn(2+) is required as a cofactor.

It carries out the reaction hydrogencarbonate + L-glutamine + 2 ATP + H2O = carbamoyl phosphate + L-glutamate + 2 ADP + phosphate + 2 H(+). It catalyses the reaction hydrogencarbonate + NH4(+) + 2 ATP = carbamoyl phosphate + 2 ADP + phosphate + 2 H(+). The protein operates within amino-acid biosynthesis; L-arginine biosynthesis; carbamoyl phosphate from bicarbonate: step 1/1. It participates in pyrimidine metabolism; UMP biosynthesis via de novo pathway; (S)-dihydroorotate from bicarbonate: step 1/3. Large subunit of the glutamine-dependent carbamoyl phosphate synthetase (CPSase). CPSase catalyzes the formation of carbamoyl phosphate from the ammonia moiety of glutamine, carbonate, and phosphate donated by ATP, constituting the first step of 2 biosynthetic pathways, one leading to arginine and/or urea and the other to pyrimidine nucleotides. The large subunit (synthetase) binds the substrates ammonia (free or transferred from glutamine from the small subunit), hydrogencarbonate and ATP and carries out an ATP-coupled ligase reaction, activating hydrogencarbonate by forming carboxy phosphate which reacts with ammonia to form carbamoyl phosphate. In Buchnera aphidicola subsp. Acyrthosiphon pisum (strain APS) (Acyrthosiphon pisum symbiotic bacterium), this protein is Carbamoyl phosphate synthase large chain.